Reading from the N-terminus, the 299-residue chain is GTPase Era (299 aa).

Residues 5 to 175 form the Era-type G domain; that stretch reads RSGFVCFVGR…TNVLVSQLPP (171 aa). Residues 13–20 are G1; that stretch reads GRPNTGKS. Residue 13–20 coordinates GTP; it reads GRPNTGKS. The G2 stretch occupies residues 39–43; sequence QTTRH. The interval 60–63 is G3; the sequence is DTPG. GTP is bound by residues 60 to 64 and 124 to 127; these read DTPGL and TKID. A G4 region spans residues 124–127; that stretch reads TKID. A G5 region spans residues 154–156; it reads VSA. Residues 206 to 285 form the KH type-2 domain; it reads VRDELPHSLA…YLDLRVKIAK (80 aa).

Belongs to the TRAFAC class TrmE-Era-EngA-EngB-Septin-like GTPase superfamily. Era GTPase family. As to quaternary structure, monomer. Stays in the monomer conformation, irrespective of the presence of GTP.

It is found in the cell envelope. Its subcellular location is the secreted. The protein localises to the cell wall. Its activity is regulated as follows. Co-purified with RNA upon overexpression in E.coli, but RNAs do not appear to influence the GTPase activity. Its function is as follows. Exhibits GTPase activity. Binds RNA but is probably not involved in ribosome assembly in mycobacteria. Cannot use ATP. This chain is GTPase Era, found in Mycolicibacterium smegmatis (strain ATCC 700084 / mc(2)155) (Mycobacterium smegmatis).